Consider the following 149-residue polypeptide: HMG1/2-like protein (149 aa).

Composition is skewed to basic and acidic residues over residues 1–15 (MKGG…KAET) and 35–44 (KGKEPKDPNK). 2 disordered regions span residues 1-52 (MKGG…PSAF) and 112-149 (AYNK…EDDD). Positions 45-114 (PKRPPSAFFV…EYEITLQAYN (70 aa)) form a DNA-binding region, HMG box. A compositionally biased stretch (acidic residues) spans 134 to 149 (NDEDEDEEDEEDEDDD).

It belongs to the HMGB family.

Its subcellular location is the nucleus. This chain is HMG1/2-like protein, found in Vicia faba (Broad bean).